The primary structure comprises 283 residues: SNF1-related protein kinase regulatory subunit beta-1 (283 aa).

Residues 1–10 (MGNANGKDED) show a composition bias toward basic and acidic residues. Residues 1-63 (MGNANGKDED…PARSPSPFLF (63 aa)) form a disordered region. The N-myristoyl glycine moiety is linked to residue Gly-2. Low complexity predominate over residues 43-60 (SDSMSSSPPGSPARSPSP). A kinase-interacting sequence (KIS) region spans residues 101-178 (PTIITWNQGG…VGNVCNILDV (78 aa)). Residues 215–283 (EPLAVPPQLH…TVVLYKPLTR (69 aa)) form an association with SNF1 complex (ASC) region.

It belongs to the 5'-AMP-activated protein kinase beta subunit family. Subunit of a probable heterotrimeric complex consisting of an alpha catalytic (KIN10 or KIN11) subunit, and a beta (KINB) and a gamma (KING or SNF4) non-catalytic regulatory subunits. Interacts with SNF4 and CBL1. Interacts with FLZ1, FLZ2, FLZ8, FLZ9, FLZ10, FLZ12, FLZ13, FLZ14 and FLZ15. In terms of processing, sumoylated by SIZ1. In terms of tissue distribution, expressed in vegetative organs and, to lower extent, in reproductive organs.

It is found in the cell membrane. Its function is as follows. Regulatory subunit of the probable trimeric SNF1-related protein kinase (SnRK) complex, which may play a role in a signal transduction cascade regulating gene expression and carbohydrate metabolism in higher plants. The SnRK complex may also be involved in the regulation of fatty acid synthesis by phosphorylation of acetyl-CoA carboxylase and in assimilation of nitrogen by phosphorylating nitrate reductase. This Arabidopsis thaliana (Mouse-ear cress) protein is SNF1-related protein kinase regulatory subunit beta-1 (KINB1).